Here is a 204-residue protein sequence, read N- to C-terminus: Ribosomal RNA small subunit methyltransferase G (204 aa).

S-adenosyl-L-methionine-binding positions include Gly76, Leu81, 127-128, and Arg140; that span reads IE.

This sequence belongs to the methyltransferase superfamily. RNA methyltransferase RsmG family.

The protein localises to the cytoplasm. The enzyme catalyses guanosine(527) in 16S rRNA + S-adenosyl-L-methionine = N(7)-methylguanosine(527) in 16S rRNA + S-adenosyl-L-homocysteine. Functionally, specifically methylates the N7 position of guanine in position 527 of 16S rRNA. The sequence is that of Ribosomal RNA small subunit methyltransferase G from Francisella philomiragia subsp. philomiragia (strain ATCC 25017 / CCUG 19701 / FSC 153 / O#319-036).